A 547-amino-acid polypeptide reads, in one-letter code: CTP synthase (547 aa).

Residues methionine 1–isoleucine 265 are amidoligase domain. Residue serine 13 participates in CTP binding. Residue serine 13 coordinates UTP. Residues serine 14 to leucine 19 and aspartate 71 each bind ATP. Residues aspartate 71 and glutamate 139 each coordinate Mg(2+). CTP contacts are provided by residues aspartate 146–glutamate 148, lysine 186–glutamine 191, and lysine 222. Residues lysine 186–glutamine 191 and lysine 222 contribute to the UTP site. Positions lysine 291 to leucine 546 constitute a Glutamine amidotransferase type-1 domain. Glycine 353 provides a ligand contact to L-glutamine. The Nucleophile; for glutamine hydrolysis role is filled by cysteine 380. L-glutamine is bound by residues leucine 381 to glutamine 384, glutamate 404, and arginine 474. Catalysis depends on residues histidine 519 and glutamate 521.

It belongs to the CTP synthase family. In terms of assembly, homotetramer.

The catalysed reaction is UTP + L-glutamine + ATP + H2O = CTP + L-glutamate + ADP + phosphate + 2 H(+). It catalyses the reaction L-glutamine + H2O = L-glutamate + NH4(+). The enzyme catalyses UTP + NH4(+) + ATP = CTP + ADP + phosphate + 2 H(+). It participates in pyrimidine metabolism; CTP biosynthesis via de novo pathway; CTP from UDP: step 2/2. Allosterically activated by GTP, when glutamine is the substrate; GTP has no effect on the reaction when ammonia is the substrate. The allosteric effector GTP functions by stabilizing the protein conformation that binds the tetrahedral intermediate(s) formed during glutamine hydrolysis. Inhibited by the product CTP, via allosteric rather than competitive inhibition. In terms of biological role, catalyzes the ATP-dependent amination of UTP to CTP with either L-glutamine or ammonia as the source of nitrogen. Regulates intracellular CTP levels through interactions with the four ribonucleotide triphosphates. The sequence is that of CTP synthase from Roseobacter denitrificans (strain ATCC 33942 / OCh 114) (Erythrobacter sp. (strain OCh 114)).